A 146-amino-acid polypeptide reads, in one-letter code: Large ribosomal subunit protein uL15 (146 aa).

Basic and acidic residues predominate over residues 1–13 (MKLHELKAAEGSR). Positions 1–51 (MKLHELKAAEGSRKVRNRVGRGTSSGNGKTSGRGQKGQKARSGGGVRLGFE) are disordered. Gly residues-rich tracts occupy residues 23-35 (TSSGNGKTSGRGQ) and 42-51 (SGGGVRLGFE).

It belongs to the universal ribosomal protein uL15 family. As to quaternary structure, part of the 50S ribosomal subunit.

In terms of biological role, binds to the 23S rRNA. In Streptococcus pyogenes serotype M1, this protein is Large ribosomal subunit protein uL15.